The chain runs to 272 residues: Indole-3-glycerol phosphate synthase (272 aa).

The protein belongs to the TrpC family.

The enzyme catalyses 1-(2-carboxyphenylamino)-1-deoxy-D-ribulose 5-phosphate + H(+) = (1S,2R)-1-C-(indol-3-yl)glycerol 3-phosphate + CO2 + H2O. It functions in the pathway amino-acid biosynthesis; L-tryptophan biosynthesis; L-tryptophan from chorismate: step 4/5. In Mycolicibacterium smegmatis (strain ATCC 700084 / mc(2)155) (Mycobacterium smegmatis), this protein is Indole-3-glycerol phosphate synthase.